The primary structure comprises 2602 residues: Filamin-B (2602 aa).

Residues 1–239 (MPVTEKDLAE…VMTYLSQFPK (239 aa)) are actin-binding. 2 consecutive Calponin-homology (CH) domains span residues 16–122 (KIQQ…LHYS) and 139–242 (QTPK…KAKL). Thr-216 carries the phosphothreonine modification. The disordered stretch occupies residues 244 to 267 (PGAPLKPKLNPKKARAYGRGIEPT). Filamin repeat units lie at residues 249 to 347 (KPKL…EVSV), 349 to 446 (KAQG…VVQV), 447 to 543 (GEAC…EVQV), 544 to 636 (GPEA…MAFI), 640 to 736 (TGGY…RVNI), 737 to 839 (GQGS…RVKV), 840 to 938 (DPSH…TVGV), 939 to 1034 (AAPL…TVEA), 1035 to 1127 (SLPP…KADI), 1128 to 1222 (EMPF…RVKV), 1223 to 1322 (EPAV…KVAV), 1323 to 1415 (TEGC…RVPV), 1416 to 1511 (KDVV…KVKV), 1512 to 1608 (LPTY…RIRA), and 1609 to 1704 (TQTG…TVMA). Thr-519 is modified (phosphothreonine). Lys-681 is subject to N6-acetyllysine. Ser-730 carries the phosphoserine modification. Residues Ser-886, Ser-932, Ser-983, and Ser-1028 each carry the phosphoserine modification. Residues 1128 to 1511 (EMPFDPSKVV…IPRSPFKVKV (384 aa)) form an interaction with FBLP1 region. Thr-1307 bears the Phosphothreonine mark. Ser-1316 is modified (phosphoserine). A phosphoserine mark is found at Ser-1433, Asn-1474, Ser-1505, and Ser-1602. The interval 1705-1728 (TDGEVTAVEEAPVNACPPGFRPWV) is hinge 1. 8 Filamin repeats span residues 1729 to 1813 (TEEA…SPLQ), 1816 to 1908 (VNYP…TAKI), 1919 to 1994 (KLGS…SIMV), 1997 to 2089 (SEIG…TVKI), 2091 to 2185 (GEGR…QFTV), 2188 to 2280 (LGEG…LVPV), 2282 to 2375 (APSD…KVRV), and 2379 to 2471 (GQAG…KAKV). Lys-1780 carries the N6-acetyllysine modification. The interaction with the cytoplasmic tail of GP1BA stretch occupies residues 1862–2148 (SKAEISCIDN…RVTEAEIVPM (287 aa)). An interaction with FLNA 1 region spans residues 2060–2225 (SYFPTVPGVY…IWTREAGAGG (166 aa)). Ser-2083, Ser-2107, and Ser-2113 each carry phosphoserine. Residues 2130 to 2602 (SAHVTSPSGR…PGSPFHVTVP (473 aa)) are interaction with INPPL1. Residues Ser-2369 and Ser-2465 each carry the phosphoserine modification. Lys-2468 participates in a covalent cross-link: Glycyl lysine isopeptide (Lys-Gly) (interchain with G-Cter in ISG15). The segment at 2472–2506 (TGQRLVSPGSANETSSILVESVTRSSTETCYSAIP) is hinge 2. The self-association site, tail stretch occupies residues 2472-2602 (TGQRLVSPGS…PGSPFHVTVP (131 aa)). Ser-2478, Ser-2481, and Ser-2492 each carry phosphoserine. The stretch at 2507 to 2601 (KASSDASKVT…IPGSPFHVTV (95 aa)) is one Filamin 24 repeat. Residues 2507–2602 (KASSDASKVT…PGSPFHVTVP (96 aa)) form an interaction with FLNA 2 region. 2 positions are modified to N6-succinyllysine: Lys-2518 and Lys-2524. Lys-2576 carries the N6-acetyllysine modification.

The protein belongs to the filamin family. As to quaternary structure, homodimer. Interacts with MICALL2. Interacts with RFLNA and RFLNB. Isoform 1 interacts with FBLP1, FLNA, FLNC, GP1BA, INPPL1, ITGB1A, PSEN1 and PSEN2. Isoform 3 interacts with ITGB1A, ITGB1D, ITGB3 and ITGB6. Interacts with MYOT and MYOZ1. Interacts with HBV capsid protein. Interacts with ASB2 isoform 1; the interaction targets FLNB for proteasomal degradation. In terms of processing, ISGylation prevents ability to interact with the upstream activators of the JNK cascade and inhibits IFNA-induced JNK signaling. Ubiquitination by a SCF-like complex containing ASB2 isoform 1 leads to proteasomal degradation which promotes muscle differentiation. In terms of tissue distribution, ubiquitous. Isoform 1 and isoform 2 are expressed in placenta, bone marrow, brain, umbilical vein endothelial cells (HUVEC), retina and skeletal muscle. Isoform 1 is predominantly expressed in prostate, uterus, liver, thyroid, stomach, lymph node, small intestine, spleen, skeletal muscle, kidney, placenta, pancreas, heart, lung, platelets, endothelial cells, megakaryocytic and erythroleukemic cell lines. Isoform 2 is predominantly expressed in spinal cord, platelet and Daudi cells. Also expressed in thyroid adenoma, neurofibrillary tangles (NFT), senile plaques in the hippocampus and cerebral cortex in Alzheimer disease (AD). Isoform 3 and isoform 6 are expressed predominantly in lung, heart, skeletal muscle, testis, spleen, thymus and leukocytes. Isoform 4 and isoform 5 are expressed in heart.

It localises to the cytoplasm. The protein localises to the cell cortex. The protein resides in the cytoskeleton. Its subcellular location is the stress fiber. It is found in the myofibril. It localises to the sarcomere. The protein localises to the z line. In terms of biological role, connects cell membrane constituents to the actin cytoskeleton. May promote orthogonal branching of actin filaments and links actin filaments to membrane glycoproteins. Anchors various transmembrane proteins to the actin cytoskeleton. Interaction with FLNA may allow neuroblast migration from the ventricular zone into the cortical plate. Various interactions and localizations of isoforms affect myotube morphology and myogenesis. Isoform 6 accelerates muscle differentiation in vitro. The protein is Filamin-B (FLNB) of Homo sapiens (Human).